The following is a 49-amino-acid chain: Large ribosomal subunit protein bL33 (49 aa).

Belongs to the bacterial ribosomal protein bL33 family.

This is Large ribosomal subunit protein bL33 from Clostridium botulinum (strain ATCC 19397 / Type A).